The following is a 567-amino-acid chain: Platelet glycoprotein V (567 aa).

The signal sequence occupies residues 1-16 (MLRSALLSAVLPLLRA). The region spanning 17-50 (QPFPCPKTCKCVVRDAAQCSGGSVAHIAELGLPT) is the LRRNT domain. Residues 17-522 (QPFPCPKTCK…ESPNNRLYWG (506 aa)) are Extracellular-facing. Asn51 and Asn67 each carry an N-linked (GlcNAc...) asparagine glycan. LRR repeat units follow at residues 75–96 (VLQR…TFND), 99–120 (KLKT…ILDK), 123–144 (LLEQ…LFQQ), 147–168 (NLQE…LFSS), 171–193 (ELKL…LGAQ), 195–216 (KLEK…LLSN), 219–240 (ALTE…AFDR), 243–264 (NLSS…LFLH), 267–288 (SVSR…LFGE), 291–312 (GLRE…AFRN), 315–337 (GLQT…VFQG), 340–361 (ELRV…ALRG), 364–385 (HLRQ…LFRN), and 388–409 (SLES…VFAA). The N-linked (GlcNAc...) asparagine glycan is linked to Asn181. N-linked (GlcNAc...) asparagine glycosylation is present at Asn243. N-linked (GlcNAc...) asparagine glycosylation is found at Asn298 and Asn312. Asn385 carries N-linked (GlcNAc...) asparagine glycosylation. An LRRCT domain is found at 421-474 (NPWLCDCGLWRFLQWLRHHPDILGRDEPPQCRGPEPRASLSFWELLQGDPWCPD). A helical membrane pass occupies residues 523–543 (LYILLLVAQAIIAAFIVFAMI). Topologically, residues 544 to 567 (KIGQLFRTLIREKLLLEAMGKSCN) are cytoplasmic.

The protein resides in the membrane. The GPIb-V-IX complex functions as the vWF receptor and mediates vWF-dependent platelet adhesion to blood vessels. The adhesion of platelets to injured vascular surfaces in the arterial circulation is a critical initiating event in hemostasis. The chain is Platelet glycoprotein V (Gp5) from Mus musculus (Mouse).